The primary structure comprises 434 residues: Transcription initiation factor IIE subunit alpha (434 aa).

An HTH TFE/IIEalpha-type domain is found at Val8–Lys99. The C4-type zinc-finger motif lies at Cys124–Cys151. Disordered regions lie at residues Gln217 to Glu251, Ser357 to Glu408, and Ile415 to Val434. Over residues Asp226–Val238 the composition is skewed to polar residues. Composition is skewed to basic and acidic residues over residues Ser241–Glu251 and Ile376–Glu385. Polar residues predominate over residues Glu386–Ile399. A compositionally biased stretch (acidic residues) spans Asn419–Val434.

It belongs to the TFIIE alpha subunit family. TFIIE is a tetramer of two alpha (tfa1) and two beta (tfa2) subunits.

The protein localises to the nucleus. Recruits TFIIH to the initiation complex and stimulates the RNA polymerase II C-terminal domain kinase and DNA-dependent ATPase activities of TFIIH. Both TFIIH and TFIIE are required for promoter clearance by RNA polymerase. The protein is Transcription initiation factor IIE subunit alpha (tfa1) of Schizosaccharomyces pombe (strain 972 / ATCC 24843) (Fission yeast).